The primary structure comprises 1013 residues: Tolloid-like protein 1 (1013 aa).

Residues 1–30 (MGLQALSPRMLLWLVVSGIVFSRVLWVCAG) form the signal peptide. A propeptide spanning residues 31–147 (LDYDYTFDGN…EQSEKNRVPR (117 aa)) is cleaved from the precursor. The interval 124–150 (QNNTMKGKAPPKLSEQSEKNRVPRAAT) is disordered. One can recognise a Peptidase M12A domain in the interval 148–347 (AATSRTERIW…AQARKLYRCP (200 aa)). Asparagine 169 carries an N-linked (GlcNAc...) asparagine glycan. Cystine bridges form between cysteine 190-cysteine 346, cysteine 210-cysteine 232, cysteine 212-cysteine 213, and cysteine 349-cysteine 375. Histidine 240 lines the Zn(2+) pocket. Glutamate 241 is an active-site residue. Histidine 244 and histidine 250 together coordinate Zn(2+). CUB domains lie at 349-461 (CGET…YEAI) and 462-574 (CGGE…FFKE). Asparagine 359 and asparagine 390 each carry an N-linked (GlcNAc...) asparagine glycan. 15 disulfide bridges follow: cysteine 402-cysteine 424, cysteine 462-cysteine 488, cysteine 515-cysteine 537, cysteine 578-cysteine 590, cysteine 586-cysteine 599, cysteine 601-cysteine 614, cysteine 618-cysteine 644, cysteine 671-cysteine 693, cysteine 734-cysteine 745, cysteine 741-cysteine 754, cysteine 756-cysteine 769, cysteine 774-cysteine 800, cysteine 827-cysteine 849, cysteine 887-cysteine 917, and cysteine 944-cysteine 966. An EGF-like 1; calcium-binding domain is found at 574 to 615 (EEDECAKPDRGGCEQRCLNTLGSYQCACEPGYELGPDRRSCE). A CUB 3 domain is found at 618–730 (CGGLLTKLNG…KGFKAHFFSD (113 aa)). Asparagine 626 carries N-linked (GlcNAc...) asparagine glycosylation. Residues 730–770 (DKDECSKDNGGCQHECVNTMGSYTCQCRNGFVLHENKHDCK) form the EGF-like 2; calcium-binding domain. CUB domains lie at 774–886 (CEQK…HSTE) and 887–1003 (CGGR…YKSI).

Zn(2+) is required as a cofactor. Highly expressed in brain and kidney and weakly in lung, skeletal muscle. A perceptible level of expression is observed in heart and testis.

The protein resides in the secreted. In terms of biological role, protease which processes procollagen C-propeptides, such as chordin, pro-biglycan and pro-lysyl oxidase. Required for the embryonic development, especially heart development. Predominant protease, which in the development, influences dorsal-ventral patterning and skeletogenesis. This Mus musculus (Mouse) protein is Tolloid-like protein 1 (Tll1).